Reading from the N-terminus, the 75-residue chain is MYB-like transcription factor ETC3 (75 aa).

The segment at 1–20 is disordered; it reads MDNHRRTKQPKTNSIVTSSS. Residues 34 to 71 enclose the Myb-like domain; it reads SQEEEDLVSRMHKLVGDRWELIAGRIPGRTAGEIERFW.

Expressed in leaf epidermal cells, stomate guard cells in leaves, cotyledons and hypocotyls, inflorescences, developing seeds and siliques.

Its subcellular location is the nucleus. In terms of biological role, MYB-type transcription factor involved in epidermal cell fate specification. Acts as a negative regulator of trichome development, including endoreplication, by mediating lateral inhibition. Promotes the formation of hair developing cells in H position in root epidermis, probably by inhibiting non-hair cell formation. May have pleiotropic effects on flowering development and epidermal cell size through the regulation of endoreduplication. This Arabidopsis thaliana (Mouse-ear cress) protein is MYB-like transcription factor ETC3 (ETC3).